Reading from the N-terminus, the 331-residue chain is Ketol-acid reductoisomerase (NADP(+)) (331 aa).

The KARI N-terminal Rossmann domain maps to 4–183 (ATIYYDDDAE…GCTRAGVVET (180 aa)). NADP(+)-binding positions include 27 to 30 (YGSQ), Arg-50, Ser-53, Ser-55, and 85 to 88 (DTVQ). The active site involves His-109. Residue Gly-135 coordinates NADP(+). One can recognise a KARI C-terminal knotted domain in the interval 184–329 (TFREETETDL…EDLRALFAWG (146 aa)). Positions 192, 196, 228, and 232 each coordinate Mg(2+). Ser-253 contacts substrate.

This sequence belongs to the ketol-acid reductoisomerase family. Requires Mg(2+) as cofactor.

The catalysed reaction is (2R)-2,3-dihydroxy-3-methylbutanoate + NADP(+) = (2S)-2-acetolactate + NADPH + H(+). It catalyses the reaction (2R,3R)-2,3-dihydroxy-3-methylpentanoate + NADP(+) = (S)-2-ethyl-2-hydroxy-3-oxobutanoate + NADPH + H(+). The protein operates within amino-acid biosynthesis; L-isoleucine biosynthesis; L-isoleucine from 2-oxobutanoate: step 2/4. It participates in amino-acid biosynthesis; L-valine biosynthesis; L-valine from pyruvate: step 2/4. Involved in the biosynthesis of branched-chain amino acids (BCAA). Catalyzes an alkyl-migration followed by a ketol-acid reduction of (S)-2-acetolactate (S2AL) to yield (R)-2,3-dihydroxy-isovalerate. In the isomerase reaction, S2AL is rearranged via a Mg-dependent methyl migration to produce 3-hydroxy-3-methyl-2-ketobutyrate (HMKB). In the reductase reaction, this 2-ketoacid undergoes a metal-dependent reduction by NADPH to yield (R)-2,3-dihydroxy-isovalerate. The polypeptide is Ketol-acid reductoisomerase (NADP(+)) (Natronomonas pharaonis (strain ATCC 35678 / DSM 2160 / CIP 103997 / JCM 8858 / NBRC 14720 / NCIMB 2260 / Gabara) (Halobacterium pharaonis)).